We begin with the raw amino-acid sequence, 129 residues long: Large ribosomal subunit protein bL12c (129 aa).

This sequence belongs to the bacterial ribosomal protein bL12 family. In terms of assembly, homodimer. Part of the ribosomal stalk of the 50S ribosomal subunit. Forms a multimeric L10(L12)X complex, where L10 forms an elongated spine to which 2 to 4 L12 dimers bind in a sequential fashion. Binds GTP-bound translation factors.

The protein resides in the plastid. The protein localises to the chloroplast. Functionally, forms part of the ribosomal stalk which helps the ribosome interact with GTP-bound translation factors. Is thus essential for accurate translation. The protein is Large ribosomal subunit protein bL12c of Pyropia yezoensis (Susabi-nori).